The sequence spans 570 residues: E3 ubiquitin-protein ligase ZFP91 (570 aa).

Residues Met1–Glu12 are compositionally biased toward basic and acidic residues. Residues Met1–Pro306 are disordered. Composition is skewed to low complexity over residues Gln31 to Gly43 and Ala59 to Val68. Residues Ser69 to Ser82 show a composition bias toward basic residues. Residues Ser83 and Ser103 each carry the phosphoserine modification. The segment covering Gln94 to Pro104 has biased composition (polar residues). The span at Val119–Glu128 shows a compositional bias: basic and acidic residues. A compositionally biased stretch (acidic residues) spans Ser207–Glu223. Basic and acidic residues-rich tracts occupy residues Ile224–Lys245 and Lys252–Glu269. Residues Val270–Glu282 are compositionally biased toward acidic residues. 5 consecutive C2H2-type zinc fingers follow at residues Val311–His336, Tyr342–His366, Tyr372–His394, Leu400–His422, and Phe430–His453. Residues Leu338–Asp368 form an interaction with MAP3K14/NIK region.

Belongs to the krueppel C2H2-type zinc-finger protein family. As to quaternary structure, interacts with MAP3K14/NIK. As to expression, expressed ubiquitously, particularly at high level in testis. Isoform 2 is testis specific.

It localises to the nucleus. The catalysed reaction is S-ubiquitinyl-[E2 ubiquitin-conjugating enzyme]-L-cysteine + [acceptor protein]-L-lysine = [E2 ubiquitin-conjugating enzyme]-L-cysteine + N(6)-ubiquitinyl-[acceptor protein]-L-lysine.. It functions in the pathway protein modification; protein ubiquitination. Functionally, atypical E3 ubiquitin-protein ligase that mediates 'Lys-63'-linked ubiquitination of MAP3K14/NIK, leading to stabilize and activate MAP3K14/NIK. It thereby acts as an activator of the non-canonical NF-kappa-B2/NFKB2 pathway. May also play an important role in cell proliferation and/or anti-apoptosis. The sequence is that of E3 ubiquitin-protein ligase ZFP91 (ZFP91) from Homo sapiens (Human).